The chain runs to 675 residues: MELSLSTSSASPAVLRRQASPLLHKQQVLGVSFASALKPGGGALRFPSRRPLPRPITCSASPSTAEPASEVKKKQLDRRDNVRNIAIVAHVDHGKTTLVDSMLRQAKVFRDNQVMQERIMDSNDLERERGITILSKNTSITYKNTKVNIIDTPGHSDFGGEVERVLNMVDGVLLVVDSVEGPMPQTRFVLKKALEFGHAVVVVVNKIDRPSARPEFVVNSTFELFIELNATDEQCDFQAIYASGIKGKAGLSPDDLAEDLGPLFEAIIRCVPGPNIEKDGALQMLATNIEYDEHKGRIAIGRLHAGVLRKGMDVRVCTSEDSCRFARVSELFVYEKFYRVPTDSVEAGDICAVCGIDNIQIGETIADKVHGKPLPTIKVEEPTVKMSFSVNTSPFSGREGKYVTSRNLRDRLNRELERNLAMKVEDGETADTFIVSGRGTLHITILIENMRREGYEFMVGPPKVINKRVNDKLLEPYEIATVEVPEAHMGPVVELLGKRRGQMFDMQGVGSEGTTFLRYKIPTRGLLGLRNAILTASRGTAILNTVFDSYGPWAGDISTRDLGSLVAFEDGTSTSYALASAQERGQMFVGSGVDVYKGQIVGIHQRPGDLGLNICKKKAATNIRSNKDVTVILDTPLTYSLDDCIEYIEEDELVEVTPSSIRMCKNQKMAKKGRQ.

A chloroplast-targeting transit peptide spans 1 to 58 (MELSLSTSSASPAVLRRQASPLLHKQQVLGVSFASALKPGGGALRFPSRRPLPRPITC). Residues 43–76 (ALRFPSRRPLPRPITCSASPSTAEPASEVKKKQL) are disordered. Residues 59 to 68 (SASPSTAEPA) are compositionally biased toward low complexity. Residues 80 to 275 (DNVRNIAIVA…AIIRCVPGPN (196 aa)) form the tr-type G domain.

The protein belongs to the TRAFAC class translation factor GTPase superfamily. Classic translation factor GTPase family. BipA subfamily.

The protein localises to the plastid. The protein resides in the chloroplast. Putative chloroplastic elongation factor involved in response to chilling stress. Required for proper chloroplast rRNA processing and/or translation at low temperature. Involved in plastid protein homeostasis. This chain is Putative elongation factor TypA-like SVR3, chloroplastic (SVR3), found in Arabidopsis thaliana (Mouse-ear cress).